A 503-amino-acid polypeptide reads, in one-letter code: Major facilitator superfamily domain-containing protein 4A (503 aa).

A run of 12 helical transmembrane segments spans residues 19 to 39 (LTYWSVFFSFGLCIAFLGPTL), 53 to 73 (ITWVFFAQQFCLLVGSTLGGV), 82 to 102 (LFLLFLSSLTISVVFVIIPFC), 105 to 125 (VGVLALVMAIAGLAMGCIDTI), 139 to 159 (AIFLQVLHFFVGFGALLSPLI), 214 to 234 (YAFWIMAAINLPVPVAVFYLI), 289 to 309 (IWNAPFTFFAIHMCAAVTLFM), 338 to 358 (GYLPSLFWAFITLGRLISIPV), 366 to 386 (SMLFINLIGVTATFLFLLLSQ), 392 to 412 (MFVGTALLGLWLSSVFPSMLA), 427 to 447 (VLVTGAGMGEMVLQILVGSVM), and 455 to 475 (FLVCGICLSSLAFTLYAVLLV). A disordered region spans residues 484–503 (SEDSACKPPGLDGEATSYQS).

It belongs to the major facilitator superfamily.

It localises to the membrane. The protein is Major facilitator superfamily domain-containing protein 4A (mfsd4a) of Xenopus tropicalis (Western clawed frog).